Here is a 419-residue protein sequence, read N- to C-terminus: Phospho-N-acetylmuramoyl-pentapeptide-transferase (419 aa).

10 helical membrane passes run 22–42 (YVSF…TVIG), 72–92 (TPTM…LLLA), 99–119 (ILLM…DDYI), 135–155 (IIGQ…NPAV), 208–228 (VLFG…FISN), 238–258 (GLAT…AYVS), 278–298 (LTIF…YNAY), 303–323 (FMGD…ALII), 328–348 (LLPI…IQVF), and 396–416 (KITV…IATL).

This sequence belongs to the glycosyltransferase 4 family. MraY subfamily. Mg(2+) is required as a cofactor.

The protein resides in the cell inner membrane. It carries out the reaction UDP-N-acetyl-alpha-D-muramoyl-L-alanyl-gamma-D-glutamyl-meso-2,6-diaminopimeloyl-D-alanyl-D-alanine + di-trans,octa-cis-undecaprenyl phosphate = di-trans,octa-cis-undecaprenyl diphospho-N-acetyl-alpha-D-muramoyl-L-alanyl-D-glutamyl-meso-2,6-diaminopimeloyl-D-alanyl-D-alanine + UMP. Its pathway is cell wall biogenesis; peptidoglycan biosynthesis. In terms of biological role, catalyzes the initial step of the lipid cycle reactions in the biosynthesis of the cell wall peptidoglycan: transfers peptidoglycan precursor phospho-MurNAc-pentapeptide from UDP-MurNAc-pentapeptide onto the lipid carrier undecaprenyl phosphate, yielding undecaprenyl-pyrophosphoryl-MurNAc-pentapeptide, known as lipid I. The polypeptide is Phospho-N-acetylmuramoyl-pentapeptide-transferase (Porphyromonas gingivalis (strain ATCC BAA-308 / W83)).